The chain runs to 865 residues: Fanconi-associated nuclease 1 homolog (865 aa).

The UBZ4-type zinc finger occupies 35-62; it reads GKICPLCETKFSLASYKSHMNTCNVADD. Residues Cys38, Cys41, His53, and Cys57 each coordinate Zn(2+). 2 disordered regions span residues 90–140 and 162–187; these read DASF…SLDV and RRSSRLLQNSQKDQADNANKEDPVKK. Composition is skewed to basic and acidic residues over residues 93 to 112 and 174 to 187; these read FSDKSENPTKRRKTDEREVP and DQADNANKEDPVKK. Mn(2+) is bound by residues Glu682, Asp810, Glu825, and Val826. Residues 744–857 form the VRR-NUC domain; that stretch reads QELIEENIRK…GIRAEVCHVA (114 aa).

The protein belongs to the FAN1 family. Mn(2+) is required as a cofactor. Requires Mg(2+) as cofactor.

It localises to the nucleus. It catalyses the reaction Hydrolytically removes 5'-nucleotides successively from the 3'-hydroxy termini of 3'-hydroxy-terminated oligonucleotides.. Functionally, nuclease required for the repair of DNA interstrand cross-links (ICL). Acts as a 5'-3' exonuclease that anchors at a cut end of DNA and cleaves DNA successively at every third nucleotide, allowing to excise an ICL from one strand through flanking incisions. This is Fanconi-associated nuclease 1 homolog (fan-1) from Caenorhabditis elegans.